Here is a 362-residue protein sequence, read N- to C-terminus: MSTNNSVQPVSPASELLSNTTCQLEEDLSISFSIIFMTVGILSNSLAIAILMKAYQRFRQKYKSSFLLLASALVITDFFGHLINGTIAVFVYASDKDWIYFDKSNILCSIFGICMVFSGLCPLFLGSLMAIERCIGVTKPIFHSTKITTKHVKMMLSGVCFFAVFVALLPILGHRDYKIQASRTWCFYKTDQIKDWEDRFYLLLFAFLGLLALGISFVCNAITGISLLKVKFRSQQHRQGRSHHFEMVIQLLGIMCVSCICWSPFLVTMASIGMNIQDFKDSCERTLFTLRMATWNQILDPWVYILLRKAVLRNLYVCTRRCCGVHVISLHVWELSSIKNSLKVAAISDLPVTEKVTQQTST.

Residues 1-31 (MSTNNSVQPVSPASELLSNTTCQLEEDLSIS) are Extracellular-facing. 2 N-linked (GlcNAc...) asparagine glycosylation sites follow: Asn-4 and Asn-19. A helical transmembrane segment spans residues 32-54 (FSIIFMTVGILSNSLAIAILMKA). Topologically, residues 55–69 (YQRFRQKYKSSFLLL) are cytoplasmic. A helical membrane pass occupies residues 70–90 (ASALVITDFFGHLINGTIAVF). The Extracellular portion of the chain corresponds to 91 to 109 (VYASDKDWIYFDKSNILCS). Residues Cys-108 and Cys-186 are joined by a disulfide bond. The helical transmembrane segment at 110 to 131 (IFGICMVFSGLCPLFLGSLMAI) threads the bilayer. The Cytoplasmic portion of the chain corresponds to 132–152 (ERCIGVTKPIFHSTKITTKHV). Residues 153–175 (KMMLSGVCFFAVFVALLPILGHR) form a helical membrane-spanning segment. At 176-198 (DYKIQASRTWCFYKTDQIKDWED) the chain is on the extracellular side. A helical membrane pass occupies residues 199–224 (RFYLLLFAFLGLLALGISFVCNAITG). The Cytoplasmic segment spans residues 225–250 (ISLLKVKFRSQQHRQGRSHHFEMVIQ). A helical membrane pass occupies residues 251–267 (LLGIMCVSCICWSPFLV). Residues 268 to 285 (TMASIGMNIQDFKDSCER) lie on the Extracellular side of the membrane. The helical transmembrane segment at 286–307 (TLFTLRMATWNQILDPWVYILL) threads the bilayer. Topologically, residues 308–362 (RKAVLRNLYVCTRRCCGVHVISLHVWELSSIKNSLKVAAISDLPVTEKVTQQTST) are cytoplasmic.

Belongs to the G-protein coupled receptor 1 family.

It is found in the cell membrane. Functionally, receptor for prostaglandin F2-alpha (PGF2-alpha). The activity of this receptor is mediated by G proteins which activate a phosphatidylinositol-calcium second messenger system. Initiates luteolysis in the corpus luteum. The sequence is that of Prostaglandin F2-alpha receptor (PTGFR) from Ovis aries (Sheep).